The following is a 341-amino-acid chain: Phosphoribosylformylglycinamidine cyclo-ligase (341 aa).

Belongs to the AIR synthase family.

The protein localises to the cytoplasm. It carries out the reaction 2-formamido-N(1)-(5-O-phospho-beta-D-ribosyl)acetamidine + ATP = 5-amino-1-(5-phospho-beta-D-ribosyl)imidazole + ADP + phosphate + H(+). It participates in purine metabolism; IMP biosynthesis via de novo pathway; 5-amino-1-(5-phospho-D-ribosyl)imidazole from N(2)-formyl-N(1)-(5-phospho-D-ribosyl)glycinamide: step 2/2. In Caldicellulosiruptor bescii (strain ATCC BAA-1888 / DSM 6725 / KCTC 15123 / Z-1320) (Anaerocellum thermophilum), this protein is Phosphoribosylformylglycinamidine cyclo-ligase.